Consider the following 429-residue polypeptide: Adenylosuccinate synthetase (429 aa).

Residues 12–18 (GDEGKGK) and 40–42 (GHT) contribute to the GTP site. The active-site Proton acceptor is the Asp13. Mg(2+) is bound by residues Asp13 and Gly40. Residues 13–16 (DEGK), 38–41 (NAGH), Thr129, Arg143, Gln223, Thr238, and Arg302 contribute to the IMP site. The active-site Proton donor is His41. 298-304 (VVTGRKR) provides a ligand contact to substrate. GTP-binding positions include Arg304, 330–332 (KLD), and 412–414 (STS).

This sequence belongs to the adenylosuccinate synthetase family. In terms of assembly, homodimer. Mg(2+) serves as cofactor.

The protein localises to the cytoplasm. The catalysed reaction is IMP + L-aspartate + GTP = N(6)-(1,2-dicarboxyethyl)-AMP + GDP + phosphate + 2 H(+). It functions in the pathway purine metabolism; AMP biosynthesis via de novo pathway; AMP from IMP: step 1/2. Its function is as follows. Plays an important role in the de novo pathway of purine nucleotide biosynthesis. Catalyzes the first committed step in the biosynthesis of AMP from IMP. The sequence is that of Adenylosuccinate synthetase from Maricaulis maris (strain MCS10) (Caulobacter maris).